The chain runs to 253 residues: 3-dehydroquinate dehydratase (253 aa).

Residues 46-48 (EWR) and Arg82 contribute to the 3-dehydroquinate site. His143 (proton donor/acceptor) is an active-site residue. The Schiff-base intermediate with substrate role is filled by Lys170. Residues Arg213, Ser232, and Gln236 each coordinate 3-dehydroquinate.

Belongs to the type-I 3-dehydroquinase family. Homodimer.

The catalysed reaction is 3-dehydroquinate = 3-dehydroshikimate + H2O. The protein operates within metabolic intermediate biosynthesis; chorismate biosynthesis; chorismate from D-erythrose 4-phosphate and phosphoenolpyruvate: step 3/7. Functionally, involved in the third step of the chorismate pathway, which leads to the biosynthesis of aromatic amino acids. Catalyzes the cis-dehydration of 3-dehydroquinate (DHQ) and introduces the first double bond of the aromatic ring to yield 3-dehydroshikimate. This is 3-dehydroquinate dehydratase from Syntrophotalea carbinolica (strain DSM 2380 / NBRC 103641 / GraBd1) (Pelobacter carbinolicus).